The sequence spans 582 residues: Phosphoglucomutase, cytoplasmic (582 aa).

Residues arginine 25 and serine 124 each contribute to the alpha-D-glucose 1,6-bisphosphate site. The active-site Phosphoserine intermediate is serine 124. Mg(2+)-binding residues include serine 124, aspartate 299, aspartate 301, and aspartate 303. Serine 124 carries the phosphoserine modification. Residues aspartate 303, arginine 304, threonine 367, glutamate 386, serine 388, and lysine 399 each coordinate alpha-D-glucose 1,6-bisphosphate.

The protein belongs to the phosphohexose mutase family. Monomer. Mg(2+) is required as a cofactor.

It is found in the cytoplasm. It carries out the reaction alpha-D-glucose 1-phosphate = alpha-D-glucose 6-phosphate. It catalyses the reaction O-phospho-L-seryl-[protein] + alpha-D-glucose 1-phosphate = alpha-D-glucose 1,6-bisphosphate + L-seryl-[protein]. The enzyme catalyses alpha-D-glucose 1,6-bisphosphate + L-seryl-[protein] = O-phospho-L-seryl-[protein] + alpha-D-glucose 6-phosphate. Its function is as follows. Catalyzes the reversible isomerization of alpha-D-glucose 1-phosphate to alpha-D-glucose 6-phosphate. The mechanism proceeds via the intermediate compound alpha-D-glucose 1,6-bisphosphate. This enzyme participates in both the breakdown and synthesis of glucose. In Populus tremula (European aspen), this protein is Phosphoglucomutase, cytoplasmic (PGM1).